The following is a 63-amino-acid chain: Cecropin-C (63 aa).

The N-terminal stretch at 1–23 (MNFYKIFVFVALILAISIGQSEA) is a signal peptide. Arg-62 is modified (arginine amide).

This sequence belongs to the cecropin family.

The protein localises to the secreted. In terms of biological role, cecropins have lytic and antibacterial activity against several Gram-positive and Gram-negative bacteria. In Drosophila mauritiana (Fruit fly), this protein is Cecropin-C (CecC).